The primary structure comprises 168 residues: Small ribosomal subunit protein uS5 (168 aa).

One can recognise an S5 DRBM domain in the interval 17–80; it reads IEDQLVAVNR…EDGKKKMINV (64 aa).

Belongs to the universal ribosomal protein uS5 family. As to quaternary structure, part of the 30S ribosomal subunit. Contacts proteins S4 and S8.

In terms of biological role, with S4 and S12 plays an important role in translational accuracy. Functionally, located at the back of the 30S subunit body where it stabilizes the conformation of the head with respect to the body. The protein is Small ribosomal subunit protein uS5 of Lactobacillus acidophilus (strain ATCC 700396 / NCK56 / N2 / NCFM).